The chain runs to 224 residues: 7-cyano-7-deazaguanine synthase (224 aa).

11-21 (FSGGQDSTTCL) contacts ATP. C190, C199, C202, and C205 together coordinate Zn(2+).

Belongs to the QueC family. It depends on Zn(2+) as a cofactor.

It carries out the reaction 7-carboxy-7-deazaguanine + NH4(+) + ATP = 7-cyano-7-deazaguanine + ADP + phosphate + H2O + H(+). It functions in the pathway purine metabolism; 7-cyano-7-deazaguanine biosynthesis. Its function is as follows. Catalyzes the ATP-dependent conversion of 7-carboxy-7-deazaguanine (CDG) to 7-cyano-7-deazaguanine (preQ(0)). This Parabacteroides distasonis (strain ATCC 8503 / DSM 20701 / CIP 104284 / JCM 5825 / NCTC 11152) protein is 7-cyano-7-deazaguanine synthase.